The sequence spans 380 residues: Erythronate-4-phosphate dehydrogenase (380 aa).

Substrate contacts are provided by serine 45 and threonine 66. NAD(+)-binding positions include aspartate 146, threonine 174, 205 to 207, and aspartate 231; that span reads ASR. Arginine 207 is an active-site residue. The active site involves glutamate 236. Catalysis depends on histidine 253, which acts as the Proton donor. Glycine 256 serves as a coordination point for NAD(+). Residue tyrosine 257 participates in substrate binding.

The protein belongs to the D-isomer specific 2-hydroxyacid dehydrogenase family. PdxB subfamily. As to quaternary structure, homodimer.

The protein localises to the cytoplasm. It catalyses the reaction 4-phospho-D-erythronate + NAD(+) = (R)-3-hydroxy-2-oxo-4-phosphooxybutanoate + NADH + H(+). Its pathway is cofactor biosynthesis; pyridoxine 5'-phosphate biosynthesis; pyridoxine 5'-phosphate from D-erythrose 4-phosphate: step 2/5. Catalyzes the oxidation of erythronate-4-phosphate to 3-hydroxy-2-oxo-4-phosphonooxybutanoate. The protein is Erythronate-4-phosphate dehydrogenase of Pseudomonas putida (strain W619).